Consider the following 660-residue polypeptide: Translation factor GUF1, mitochondrial (660 aa).

The N-terminal 42 residues, 1-42 (MRSCVRTASSVLQSWRAHTVLRNGCPLPSRTLERLPRLARSY), are a transit peptide targeting the mitochondrion. One can recognise a tr-type G domain in the interval 62–242 (ERYRNFCIVA…AVVEKIPAPV (181 aa)). Residues 71 to 78 (AHVDHGKS), 135 to 139 (DTPGH), and 189 to 192 (NKVD) contribute to the GTP site.

Belongs to the TRAFAC class translation factor GTPase superfamily. Classic translation factor GTPase family. LepA subfamily.

The protein resides in the mitochondrion inner membrane. The catalysed reaction is GTP + H2O = GDP + phosphate + H(+). Its function is as follows. Promotes mitochondrial protein synthesis. May act as a fidelity factor of the translation reaction, by catalyzing a one-codon backward translocation of tRNAs on improperly translocated ribosomes. Binds to mitochondrial ribosomes in a GTP-dependent manner. This chain is Translation factor GUF1, mitochondrial, found in Phaeosphaeria nodorum (strain SN15 / ATCC MYA-4574 / FGSC 10173) (Glume blotch fungus).